The chain runs to 220 residues: Octanoyltransferase (220 aa).

Residues 31-211 enclose the BPL/LPL catalytic domain; that stretch reads GTAADHLLLL…HFARIFDFEM (181 aa). Residues 76-83, 143-145, and 156-158 each bind substrate; these read RGGDVTYH, AIG, and GFA. Residue Cys174 is the Acyl-thioester intermediate of the active site.

The protein belongs to the LipB family.

It is found in the cytoplasm. It carries out the reaction octanoyl-[ACP] + L-lysyl-[protein] = N(6)-octanoyl-L-lysyl-[protein] + holo-[ACP] + H(+). It participates in protein modification; protein lipoylation via endogenous pathway; protein N(6)-(lipoyl)lysine from octanoyl-[acyl-carrier-protein]: step 1/2. Its function is as follows. Catalyzes the transfer of endogenously produced octanoic acid from octanoyl-acyl-carrier-protein onto the lipoyl domains of lipoate-dependent enzymes. Lipoyl-ACP can also act as a substrate although octanoyl-ACP is likely to be the physiological substrate. The chain is Octanoyltransferase from Solibacter usitatus (strain Ellin6076).